Consider the following 80-residue polypeptide: Metallothionein-like protein type 2 (80 aa).

The protein belongs to the metallothionein superfamily. Type 15 family.

Metallothioneins have a high content of cysteine residues that bind various heavy metals. In Brassica campestris (Field mustard), this protein is Metallothionein-like protein type 2.